A 272-amino-acid chain; its full sequence is Polar tube protein 2 (272 aa).

The N-terminal stretch at 1-21 (MLLLFTVVTLVSAAQVAPVTP) is a signal peptide. N-linked (GlcNAc...) asparagine glycosylation occurs at N134. Residues 231 to 272 (RAIQKKEVKESSKDGEKSSTQNGEGTTDDEDGQQSPDGNGPE) form a disordered region. Basic and acidic residues predominate over residues 234-247 (QKKEVKESSKDGEK). The span at 263 to 272 (QQSPDGNGPE) shows a compositional bias: polar residues.

The protein resides in the spore polar tube. In terms of biological role, involved in formation of a polar tube through which the infectious agent is passed on to the host cell. In Encephalitozoon hellem (Microsporidian parasite), this protein is Polar tube protein 2 (PTP2).